The sequence spans 86 residues: Chymotrypsin inhibitor (86 aa).

An N-terminal signal peptide occupies residues 1–22 (MKLLFAIVALLALAFLCADISA).

Belongs to the protease inhibitor I13 (potato type I serine protease inhibitor) family. In terms of assembly, monomer. Expressed in the body wall, coelomocytes and at a lower level in intestine.

The protein localises to the secreted. In terms of biological role, inhibits L.terrestris digestive chymotrypsin LT_CH 1 and bovine alpha-chymotrypsin. The polypeptide is Chymotrypsin inhibitor (Lumbricus terrestris (Common earthworm)).